The following is a 1664-amino-acid chain: Peroxisome proliferator-activated receptor gamma coactivator-related protein 1 (1664 aa).

Disordered stretches follow at residues 1–44 (MAAR…GTLG), 167–255 (LLTL…VASF), 436–555 (PVVP…EGPL), 681–701 (VDPV…VSSA), 735–793 (IESG…ADIP), 818–873 (CLVP…PTPP), and 1045–1068 (HGAP…HPKH). The segment covering 12-22 (APPPSGGPGPD) has biased composition (pro residues). The span at 23–32 (PGGGARGSGW) shows a compositional bias: gly residues. A compositionally biased stretch (low complexity) spans 201–224 (SLPDPSWDFSPPSFLETSSPKLPS). Position 237 is a phosphoserine (serine 237). The interval 433 to 467 (VVEPVVPKEPQNPPANAAPGSQRARKGRKKKSKEQ) is necessary for interaction with CREB1 and NRF1 and for transcriptional coactivation. The span at 455–464 (RARKGRKKKS) shows a compositional bias: basic residues. Residues 482–499 (SSRGQSTVGTEVTSQVDN) are compositionally biased toward polar residues. The segment covering 522-531 (RAWARAWAAA) has biased composition (low complexity). Residues 533 to 549 (ENSSPKNLERSAGQSSP) show a composition bias toward polar residues. Residues serine 536 and serine 548 each carry the phosphoserine modification. Pro residues predominate over residues 823 to 836 (GPSPASPSPEPPVS). Residues 862–873 (VQSVSPAVPTPP) show a composition bias toward low complexity. Serine 1076 carries the phosphoserine modification. 3 disordered regions span residues 1093 to 1130 (EEPA…STVP), 1182 to 1209 (SEAK…DIPQ), and 1334 to 1528 (VLSL…DHYQ). Basic and acidic residues predominate over residues 1096-1113 (ASERLKPETQETRPREKP). Positions 1365–1383 (PSAPCLAPSSLLSPEASPC) are enriched in low complexity. The necessary for interaction with CREB1 and NRF1 stretch occupies residues 1379–1450 (EASPCRNDMN…SSSSSSSSSS (72 aa)). Positions 1400–1409 (RSMRCYRKAC) are enriched in basic residues. 2 positions are modified to phosphoserine: serine 1411 and serine 1413. Composition is skewed to low complexity over residues 1427–1459 (SRSV…RSLS) and 1468–1500 (SSCS…SSSR). Basic residues predominate over residues 1501-1519 (SRSRSPSPRRRSDRRRRYS). The RRM domain occupies 1543–1619 (RVVFIGKIPG…QPFDLCFGGR (77 aa)).

Interacts with CREB1 and NRF1. Strongly expressed in heart and skeletal muscle, moderately in lung, placenta, intestine, liver, kidney, spleen, thymus, colon and brain. Also expressed in several oncocytic thyroid tumors.

The protein localises to the nucleus. Its function is as follows. Acts as a coactivator during transcriptional activation of nuclear genes related to mitochondrial biogenesis and cell growth. Involved in the transcription coactivation of CREB and NRF1 target genes. This Homo sapiens (Human) protein is Peroxisome proliferator-activated receptor gamma coactivator-related protein 1 (PPRC1).